We begin with the raw amino-acid sequence, 386 residues long: Histidinol-phosphate aminotransferase (386 aa).

Positions 1 to 11 (MMVRKSTASNR) are enriched in polar residues. Residues 1–22 (MMVRKSTASNRRLQDKGDEEPV) form a disordered region. At K248 the chain carries N6-(pyridoxal phosphate)lysine.

This sequence belongs to the class-II pyridoxal-phosphate-dependent aminotransferase family. Histidinol-phosphate aminotransferase subfamily. Homodimer. Pyridoxal 5'-phosphate serves as cofactor.

It carries out the reaction L-histidinol phosphate + 2-oxoglutarate = 3-(imidazol-4-yl)-2-oxopropyl phosphate + L-glutamate. It participates in amino-acid biosynthesis; L-histidine biosynthesis; L-histidine from 5-phospho-alpha-D-ribose 1-diphosphate: step 7/9. In Moorella thermoacetica (strain ATCC 39073 / JCM 9320), this protein is Histidinol-phosphate aminotransferase.